Reading from the N-terminus, the 102-residue chain is MYIDITHYLTVSALMFTIGIAGIFLNRKNVIIILMSIELILLSVNINFVAFSAFLHDLVGQIFALFVLTVAAAEAAIGLAILVVFFRNRGSIAVEDVNVMKG.

The next 3 helical transmembrane spans lie at 5–25, 31–51, and 66–86; these read ITHYLTVSALMFTIGIAGIFL, IIILMSIELILLSVNINFVAF, and FVLTVAAAEAAIGLAILVVFF.

Belongs to the complex I subunit 4L family. In terms of assembly, NDH-1 is composed of 14 different subunits. Subunits NuoA, H, J, K, L, M, N constitute the membrane sector of the complex.

The protein localises to the cell inner membrane. The enzyme catalyses a quinone + NADH + 5 H(+)(in) = a quinol + NAD(+) + 4 H(+)(out). Functionally, NDH-1 shuttles electrons from NADH, via FMN and iron-sulfur (Fe-S) centers, to quinones in the respiratory chain. The immediate electron acceptor for the enzyme in this species is believed to be ubiquinone. Couples the redox reaction to proton translocation (for every two electrons transferred, four hydrogen ions are translocated across the cytoplasmic membrane), and thus conserves the redox energy in a proton gradient. In Bartonella tribocorum (strain CIP 105476 / IBS 506), this protein is NADH-quinone oxidoreductase subunit K.